The chain runs to 66 residues: UPF0370 protein YpfN (66 aa).

Residues 4 to 24 (LAKYWWILVLVFLVGVLLNVI) traverse the membrane as a helical segment. Positions 39-66 (KPELPPHRDFNDKWDDEDDWPKKDQPKK) are disordered. The segment covering 42–51 (LPPHRDFNDK) has biased composition (basic and acidic residues).

Belongs to the UPF0370 family.

It is found in the cell membrane. The sequence is that of UPF0370 protein YpfN from Salmonella paratyphi C (strain RKS4594).